We begin with the raw amino-acid sequence, 861 residues long: ATP-dependent helicase rhp16 (861 aa).

Residues 1–13 are compositionally biased toward polar residues; that stretch reads MGTSCNKINSNSN. The tract at residues 1–217 is disordered; that stretch reads MGTSCNKINS…KSIPSHERTH (217 aa). Basic and acidic residues-rich tracts occupy residues 14-23 and 38-57; these read KGKENMHFVL and VERDDKLDMETTRWNGKEFE. Over residues 60-82 the composition is skewed to polar residues; that stretch reads LSTNKKLIIQSNNTSSQHSTPPL. Low complexity predominate over residues 83-95; it reads SISDTSTHTGSST. Over residues 96–106 the composition is skewed to polar residues; the sequence is DNVEANPNTGF. Residues 109-123 show a composition bias toward basic residues; sequence ARKRSLRSSNLKKKF. Residues 131-145 are compositionally biased toward acidic residues; it reads ESNESEFIDDDESDE. Over residues 193–204 the composition is skewed to low complexity; the sequence is ARASSSASSSSR. A Helicase ATP-binding domain is found at 268-442; the sequence is RQEDSSFGGG…FSLLRFLRAD (175 aa). 281-288 contacts ATP; that stretch reads DEMGMGKT. The DEAH box motif lies at 393–396; it reads DEAH. Residues 609 to 652 form an RING-type zinc finger; the sequence is CKICDEVAQDAIESRCHHTFCRLCVTEYINAAGDGENVNCPSCF. In terms of domain architecture, Helicase C-terminal spans 695–848; sequence LVEELYLLRK…TIDQDEKALN (154 aa).

The protein belongs to the SNF2/RAD54 helicase family.

Its subcellular location is the nucleus. In terms of biological role, involved in global genome repair (GGR) via nucleotide excision repair (NER), in conjunction with rhp7, after UV irradiation. The protein is ATP-dependent helicase rhp16 (rhp16) of Schizosaccharomyces pombe (strain 972 / ATCC 24843) (Fission yeast).